The sequence spans 302 residues: Methionyl-tRNA formyltransferase (302 aa).

103–106 (SLLP) is a (6S)-5,6,7,8-tetrahydrofolate binding site.

This sequence belongs to the Fmt family.

It carries out the reaction L-methionyl-tRNA(fMet) + (6R)-10-formyltetrahydrofolate = N-formyl-L-methionyl-tRNA(fMet) + (6S)-5,6,7,8-tetrahydrofolate + H(+). Attaches a formyl group to the free amino group of methionyl-tRNA(fMet). The formyl group appears to play a dual role in the initiator identity of N-formylmethionyl-tRNA by promoting its recognition by IF2 and preventing the misappropriation of this tRNA by the elongation apparatus. In Pseudothermotoga lettingae (strain ATCC BAA-301 / DSM 14385 / NBRC 107922 / TMO) (Thermotoga lettingae), this protein is Methionyl-tRNA formyltransferase.